Consider the following 61-residue polypeptide: Large ribosomal subunit protein bL32 (61 aa).

Positions 1–44 (MAVQQNRKSRSRRDMRRSHDALTENALTVDQTTGETHRRHHVTK) are disordered. Over residues 7-16 (RKSRSRRDMR) the composition is skewed to basic residues. Over residues 25–34 (NALTVDQTTG) the composition is skewed to polar residues.

Belongs to the bacterial ribosomal protein bL32 family.

The chain is Large ribosomal subunit protein bL32 from Acinetobacter baylyi (strain ATCC 33305 / BD413 / ADP1).